The primary structure comprises 162 residues: Peptidyl-prolyl cis-trans isomerase (162 aa).

The 157-residue stretch at F5–T161 folds into the PPIase cyclophilin-type domain.

The protein belongs to the cyclophilin-type PPIase family. PPIase A subfamily.

The protein localises to the cytoplasm. The catalysed reaction is [protein]-peptidylproline (omega=180) = [protein]-peptidylproline (omega=0). Binds cyclosporin A (CsA). CsA mediates some of its effects via an inhibitory action on PPIase. PPIases accelerate the folding of proteins. It catalyzes the cis-trans isomerization of proline imidic peptide bonds in oligopeptides. The chain is Peptidyl-prolyl cis-trans isomerase (ppi1) from Schizosaccharomyces pombe (strain 972 / ATCC 24843) (Fission yeast).